A 242-amino-acid polypeptide reads, in one-letter code: uncharacterized protein (242 aa).

A signal peptide spans 1–17 (MKFSPAYLLAFAPIVAA). Residues Asn47, Asn86, Asn122, Asn159, and Asn178 are each glycosylated (N-linked (GlcNAc...) asparagine). The disordered stretch occupies residues 176-214 (NANESTADGQAQSGSSGSSSDSGSHSGHSSATQTSSTTA). A compositionally biased stretch (low complexity) spans 180–214 (STADGQAQSGSSGSSSDSGSHSGHSSATQTSSTTA). Ala218 carries GPI-like-anchor amidated alanine lipidation. Residues 219–242 (GAVALETAAWGILGAAVVGGLAVL) constitute a propeptide, removed in mature form.

Post-translationally, the GPI-like anchor contains a phosphoceramide lipid group. The anchor position has not been determined.

Its subcellular location is the cell membrane. This is an uncharacterized protein from Aspergillus fumigatus (strain ATCC MYA-4609 / CBS 101355 / FGSC A1100 / Af293) (Neosartorya fumigata).